Here is a 301-residue protein sequence, read N- to C-terminus: Acetylglutamate kinase (301 aa).

Residues 68–69 (GG), R90, and N195 contribute to the substrate site.

This sequence belongs to the acetylglutamate kinase family. ArgB subfamily.

The protein resides in the cytoplasm. The enzyme catalyses N-acetyl-L-glutamate + ATP = N-acetyl-L-glutamyl 5-phosphate + ADP. The protein operates within amino-acid biosynthesis; L-arginine biosynthesis; N(2)-acetyl-L-ornithine from L-glutamate: step 2/4. Catalyzes the ATP-dependent phosphorylation of N-acetyl-L-glutamate. This is Acetylglutamate kinase from Pseudomonas putida (strain GB-1).